The following is a 342-amino-acid chain: S-adenosylmethionine:tRNA ribosyltransferase-isomerase (342 aa).

Belongs to the QueA family. In terms of assembly, monomer.

It is found in the cytoplasm. The enzyme catalyses 7-aminomethyl-7-carbaguanosine(34) in tRNA + S-adenosyl-L-methionine = epoxyqueuosine(34) in tRNA + adenine + L-methionine + 2 H(+). It participates in tRNA modification; tRNA-queuosine biosynthesis. In terms of biological role, transfers and isomerizes the ribose moiety from AdoMet to the 7-aminomethyl group of 7-deazaguanine (preQ1-tRNA) to give epoxyqueuosine (oQ-tRNA). This is S-adenosylmethionine:tRNA ribosyltransferase-isomerase from Novosphingobium aromaticivorans (strain ATCC 700278 / DSM 12444 / CCUG 56034 / CIP 105152 / NBRC 16084 / F199).